The chain runs to 141 residues: Nucleoside diphosphate kinase (141 aa).

ATP contacts are provided by K11, F59, R87, T93, R104, and N114. H117 acts as the Pros-phosphohistidine intermediate in catalysis.

Belongs to the NDK family. As to quaternary structure, homotetramer. Requires Mg(2+) as cofactor.

It is found in the cytoplasm. It catalyses the reaction a 2'-deoxyribonucleoside 5'-diphosphate + ATP = a 2'-deoxyribonucleoside 5'-triphosphate + ADP. The enzyme catalyses a ribonucleoside 5'-diphosphate + ATP = a ribonucleoside 5'-triphosphate + ADP. Functionally, major role in the synthesis of nucleoside triphosphates other than ATP. The ATP gamma phosphate is transferred to the NDP beta phosphate via a ping-pong mechanism, using a phosphorylated active-site intermediate. The polypeptide is Nucleoside diphosphate kinase (Alkalilimnicola ehrlichii (strain ATCC BAA-1101 / DSM 17681 / MLHE-1)).